The following is a 157-amino-acid chain: MSINCWRSPNRAIGKSSGGVIMFKTILFPLDRSREARDAAQMVADLVKIHQSQLILLSVVEKNPPGQDHEAHGMDSPEAVAKLLEAAQAVFSQQGIATKTIEREGMASFTICDVADEVNADLIVMGCRGLGLTTEGVAESVTARVINLSPCPVLVVP.

Belongs to the universal stress protein A family.

The chain is Universal stress protein Sll1654 from Synechocystis sp. (strain ATCC 27184 / PCC 6803 / Kazusa).